A 508-amino-acid polypeptide reads, in one-letter code: Photosystem II CP47 reaction center protein (508 aa).

Helical transmembrane passes span 21–36 (SVHI…WAGS), 101–115 (IMLS…IWHW), 140–156 (GIHL…FGAF), 203–218 (IAAG…FHLS), 237–252 (VLSS…AFVV), and 457–472 (SFAL…HGAR).

Belongs to the PsbB/PsbC family. PsbB subfamily. As to quaternary structure, PSII is composed of 1 copy each of membrane proteins PsbA, PsbB, PsbC, PsbD, PsbE, PsbF, PsbH, PsbI, PsbJ, PsbK, PsbL, PsbM, PsbT, PsbX, PsbY, PsbZ, Psb30/Ycf12, at least 3 peripheral proteins of the oxygen-evolving complex and a large number of cofactors. It forms dimeric complexes. Requires Binds multiple chlorophylls. PSII binds additional chlorophylls, carotenoids and specific lipids. as cofactor.

It is found in the plastid. The protein localises to the chloroplast thylakoid membrane. Functionally, one of the components of the core complex of photosystem II (PSII). It binds chlorophyll and helps catalyze the primary light-induced photochemical processes of PSII. PSII is a light-driven water:plastoquinone oxidoreductase, using light energy to abstract electrons from H(2)O, generating O(2) and a proton gradient subsequently used for ATP formation. The polypeptide is Photosystem II CP47 reaction center protein (Piper cenocladum (Ant piper)).